A 105-amino-acid chain; its full sequence is Pyruvate synthase subunit PorD (105 aa).

4Fe-4S ferredoxin-type domains follow at residues 44-73 (FKPEFHKDKCVRCFLCYIYCPEPAIYLDEE) and 74-103 (GYPVFDYDYCKGCGICANECPTKAIEMVRE). 8 residues coordinate [4Fe-4S] cluster: Cys-53, Cys-56, Cys-59, Cys-63, Cys-83, Cys-86, Cys-89, and Cys-93.

In terms of assembly, heterotetramer of one alpha, one beta, one delta and one gamma chain. It depends on [4Fe-4S] cluster as a cofactor.

In Pyrococcus horikoshii (strain ATCC 700860 / DSM 12428 / JCM 9974 / NBRC 100139 / OT-3), this protein is Pyruvate synthase subunit PorD (porD).